Reading from the N-terminus, the 245-residue chain is Fumarate reductase iron-sulfur subunit (245 aa).

One can recognise a 2Fe-2S ferredoxin-type domain in the interval 17–98 (PQSAVNKPHF…NGVITLMPMP (82 aa)). Positions 60, 65, 68, and 80 each coordinate [2Fe-2S] cluster. In terms of domain architecture, 4Fe-4S ferredoxin-type spans 145-174 (AQEVFELDRCIECGCCIASCGTKLMRPNFI). Cys154, Cys157, and Cys160 together coordinate [4Fe-4S] cluster. 3 residues coordinate [3Fe-4S] cluster: Cys164, Cys211, and Cys217. Residue Cys221 participates in [4Fe-4S] cluster binding.

This sequence belongs to the succinate dehydrogenase/fumarate reductase iron-sulfur protein family. In terms of assembly, part of an enzyme complex containing three subunits: a flavoprotein (frdA), an iron-sulfur protein (frdB), and diheme cytochrome b (frdC). It depends on [2Fe-2S] cluster as a cofactor. [3Fe-4S] cluster is required as a cofactor. The cofactor is [4Fe-4S] cluster.

The catalysed reaction is a menaquinone + succinate = a menaquinol + fumarate. In Helicobacter pylori (strain J99 / ATCC 700824) (Campylobacter pylori J99), this protein is Fumarate reductase iron-sulfur subunit (frdB).